Here is a 334-residue protein sequence, read N- to C-terminus: Cathepsin J (334 aa).

Positions 1–17 (MTPTVLLLILCFGVASG) are cleaved as a signal peptide. A propeptide spans 18–113 (AQAHDPKLDA…PHAQNHVSIG (96 aa)) (activation peptide). A glycan (N-linked (GlcNAc...) asparagine) is linked at Asn-72. Cystine bridges form between Cys-135–Cys-178 and Cys-169–Cys-211. Residue Cys-138 is part of the active site. Residues Asn-217, Asn-221, and Asn-268 are each glycosylated (N-linked (GlcNAc...) asparagine). Cysteines 269 and 322 form a disulfide. Active-site residues include His-276 and Asn-300.

Belongs to the peptidase C1 family. Expressed specifically in placenta.

It is found in the lysosome. The polypeptide is Cathepsin J (Ctsj) (Mus musculus (Mouse)).